A 512-amino-acid polypeptide reads, in one-letter code: Cytochrome P450 76C1 (512 aa).

Residues 3–23 (IISGQALLLLFCFILSCFLIF) form a helical membrane-spanning segment. Heme is bound at residue Cys-450.

Belongs to the cytochrome P450 family. It depends on heme as a cofactor.

Its subcellular location is the membrane. The polypeptide is Cytochrome P450 76C1 (CYP76C1) (Arabidopsis thaliana (Mouse-ear cress)).